Here is a 185-residue protein sequence, read N- to C-terminus: Non-structural protein 7a (185 aa).

The N-terminal stretch at 1–16 (MRFFLLLCFFLPCFQA) is a signal peptide.

The sequence is that of Non-structural protein 7a from Rousettus leschenaultii (Leschenault's rousette).